A 416-amino-acid chain; its full sequence is MRVYLVGGAVRDRLLNFPVKERDWVVVGGTSEALLSLGYQQVGKDFPVFLHPQTHEEYALARTERKSGLGYTGFTCYAAPDVTLEDDLQRRDLTVNAIAQTPTGELVDPYHGVDDLNNRILRHVSDAFSEDPLRVLRVARFAARFAHLGFTIASETQALMSNMAINGELSVLTPERVWKETEKALASPSPQVFFQVLRDCGALAVLFPEIDNLFGVPAPEKWHPEIDTGIHTLMVLKVATELTDEVDSRFAALCHDLGKGLTPPEQWPHHYGHGPAGVKLVDQLCQRLRVPNSARDLAKLAAQYHDLVHTVTQLRPKTLLKLFDAVDAWRKPQRIEQLIIISEADARGRTGFENTPYPQGDCLRQAFKVASQVQVKNIVDSGLRGADIGHELRRQRQHALAQWKQQDDTAQDNTVT.

The ATP site is built by G8 and R11. The CTP site is built by G8 and R11. Mg(2+)-binding residues include E21 and D23. The ATP site is built by R91, R137, and R140. CTP-binding residues include R91, R137, and R140. The 102-residue stretch at 228–329 folds into the HD domain; sequence TGIHTLMVLK…LKLFDAVDAW (102 aa).

Belongs to the tRNA nucleotidyltransferase/poly(A) polymerase family. Bacterial CCA-adding enzyme type 1 subfamily. As to quaternary structure, monomer. Can also form homodimers and oligomers. Mg(2+) serves as cofactor. It depends on Ni(2+) as a cofactor.

The catalysed reaction is a tRNA precursor + 2 CTP + ATP = a tRNA with a 3' CCA end + 3 diphosphate. The enzyme catalyses a tRNA with a 3' CCA end + 2 CTP + ATP = a tRNA with a 3' CCACCA end + 3 diphosphate. Catalyzes the addition and repair of the essential 3'-terminal CCA sequence in tRNAs without using a nucleic acid template. Adds these three nucleotides in the order of C, C, and A to the tRNA nucleotide-73, using CTP and ATP as substrates and producing inorganic pyrophosphate. tRNA 3'-terminal CCA addition is required both for tRNA processing and repair. Also involved in tRNA surveillance by mediating tandem CCA addition to generate a CCACCA at the 3' terminus of unstable tRNAs. While stable tRNAs receive only 3'-terminal CCA, unstable tRNAs are marked with CCACCA and rapidly degraded. In Photorhabdus laumondii subsp. laumondii (strain DSM 15139 / CIP 105565 / TT01) (Photorhabdus luminescens subsp. laumondii), this protein is Multifunctional CCA protein.